We begin with the raw amino-acid sequence, 227 residues long: uncharacterized protein (227 aa).

4 helical membrane passes run Val17–Ser37, Gly79–Ile99, Leu112–Ile132, and Val181–Phe201.

It is found in the cell membrane. This is an uncharacterized protein from Escherichia coli (strain K12).